The primary structure comprises 129 residues: D-ribose pyranase (129 aa).

The active-site Proton donor is the His-20. Residues Asp-28, His-96, and Tyr-118–Asn-120 each bind substrate.

It belongs to the RbsD / FucU family. RbsD subfamily. Homodecamer.

The protein resides in the cytoplasm. The enzyme catalyses beta-D-ribopyranose = beta-D-ribofuranose. Its pathway is carbohydrate metabolism; D-ribose degradation; D-ribose 5-phosphate from beta-D-ribopyranose: step 1/2. Its function is as follows. Catalyzes the interconversion of beta-pyran and beta-furan forms of D-ribose. This chain is D-ribose pyranase, found in Exiguobacterium sp. (strain ATCC BAA-1283 / AT1b).